Consider the following 215-residue polypeptide: MTTQRHYSPIDRLLLQADMAMRTLLPFSGQPYRPSPAIVQPEAQMSDEDTRHVAGLMRINHTGEVCAQALYQGQALTAKLPQVRQAMEHAAEEEIDHLAWCEQRIRQLGSHPSVLNPLFYGLSFGIGAAAGLISDKVSLGFVAATEDQVCKHLNEHLEQLPAEDEKSRAILEQMRIDEEHHAETALEAGGFRFPAPVKFGMSLLAKVMTKSTYRI.

Fe cation contacts are provided by Glu64, Glu94, His97, Glu146, Glu178, and His181.

This sequence belongs to the COQ7 family. The cofactor is Fe cation.

The protein localises to the cell membrane. It catalyses the reaction a 5-methoxy-2-methyl-3-(all-trans-polyprenyl)benzene-1,4-diol + AH2 + O2 = a 3-demethylubiquinol + A + H2O. Its pathway is cofactor biosynthesis; ubiquinone biosynthesis. Functionally, catalyzes the hydroxylation of 2-nonaprenyl-3-methyl-6-methoxy-1,4-benzoquinol during ubiquinone biosynthesis. The chain is 3-demethoxyubiquinol 3-hydroxylase from Pseudomonas fluorescens (strain ATCC BAA-477 / NRRL B-23932 / Pf-5).